A 233-amino-acid polypeptide reads, in one-letter code: Protein Thf1 (233 aa).

Residues D183–A204 are a coiled coil. Residues A212 to E233 form a disordered region.

This sequence belongs to the THF1 family.

May be involved in photosynthetic membrane biogenesis. This chain is Protein Thf1, found in Nostoc sp. (strain PCC 7120 / SAG 25.82 / UTEX 2576).